Reading from the N-terminus, the 160-residue chain is Zinc finger A20 and AN1 domain-containing stress-associated protein 5 (160 aa).

The segment at 20-54 (TTTTTLCTNNCGVTANPATNNMCQKCFNASLVSAA) adopts an A20-type zinc-finger fold. Zn(2+) is bound by residues cysteine 26, cysteine 30, cysteine 42, cysteine 45, cysteine 101, cysteine 104, cysteine 115, cysteine 117, cysteine 122, histidine 125, histidine 131, and cysteine 133. Residues 95–141 (QQIVNRCSGCRKKVGLTGFRCRCGELFCSEHRYSDRHDCSYDYKTAG) form an AN1-type zinc finger.

Its function is as follows. May be involved in environmental stress response. The chain is Zinc finger A20 and AN1 domain-containing stress-associated protein 5 (SAP5) from Arabidopsis thaliana (Mouse-ear cress).